Consider the following 144-residue polypeptide: Transcription antitermination protein NusB (144 aa).

This sequence belongs to the NusB family.

In terms of biological role, involved in transcription antitermination. Required for transcription of ribosomal RNA (rRNA) genes. Binds specifically to the boxA antiterminator sequence of the ribosomal RNA (rrn) operons. In Blochmanniella pennsylvanica (strain BPEN), this protein is Transcription antitermination protein NusB.